A 191-amino-acid chain; its full sequence is Gene BABR protein 1 (191 aa).

The sequence is that of Gene BABR protein 1 from Babesia bovis.